Here is an 832-residue protein sequence, read N- to C-terminus: tRNA ligase (832 aa).

Lys108 (N6-AMP-lysine intermediate) is an active-site residue.

It belongs to the TRL1 family.

The enzyme catalyses ATP + (ribonucleotide)n-3'-hydroxyl + 5'-phospho-(ribonucleotide)m = (ribonucleotide)n+m + AMP + diphosphate.. In terms of biological role, one of the two proteins required for the splicing of precursor tRNA molecules containing introns. The ligation activity requires three enzymatic activities: phosphorylation of the 5' terminus of the 3' half-tRNA in the presence of ATP, opening of the 2'3'-cyclic phosphodiester bond of the 5' half-tRNA leaving a 2'-phosphomonoester and ligation of the two tRNA halves in an ATP-dependent reaction. This is tRNA ligase (LIG1) from Candida albicans (strain SC5314 / ATCC MYA-2876) (Yeast).